Reading from the N-terminus, the 825-residue chain is Thioredoxin domain-containing protein 16 (825 aa).

The first 27 residues, 1–27 (MFSGFNVFRVGISFVIMCIFYMPTVNS), serve as a signal peptide directing secretion. A Thioredoxin domain is found at 392 to 495 (LTVELTEETF…EDLLKFIQLN (104 aa)). The cysteines at positions 449 and 456 are disulfide-linked. N-linked (GlcNAc...) asparagine glycosylation is present at asparagine 460. The interval 762–787 (RKVPKCMKETDVQENDKEQHEDKSAV) is disordered. A compositionally biased stretch (basic and acidic residues) spans 767 to 787 (CMKETDVQENDKEQHEDKSAV). A Mediates endoplasmic reticulum retention motif is present at residues 816-819 (DKEL).

As to quaternary structure, interacts with FOXRED2. Post-translationally, glycosylated.

It is found in the secreted. Its subcellular location is the endoplasmic reticulum lumen. This is Thioredoxin domain-containing protein 16 from Homo sapiens (Human).